Here is a 499-residue protein sequence, read N- to C-terminus: Proline dehydrogenase 1, mitochondrial (499 aa).

The N-terminal 72 residues, M1–F72, are a transit peptide targeting the mitochondrion.

Belongs to the proline oxidase family. It depends on FAD as a cofactor. As to expression, ubiquitous. Highest expression in pollen grains, in the stigma and in developing embryos.

Its subcellular location is the mitochondrion. The enzyme catalyses L-proline + a quinone = (S)-1-pyrroline-5-carboxylate + a quinol + H(+). The protein operates within amino-acid degradation; L-proline degradation into L-glutamate; L-glutamate from L-proline: step 1/2. Converts proline to delta-1-pyrroline-5-carboxylate. This chain is Proline dehydrogenase 1, mitochondrial (POX1), found in Arabidopsis thaliana (Mouse-ear cress).